A 429-amino-acid polypeptide reads, in one-letter code: Glutamyl-tRNA reductase (429 aa).

Residues 50 to 53, S108, 113 to 115, and Q119 each bind substrate; these read TCNR and EPQ. Catalysis depends on C51, which acts as the Nucleophile. 188–193 contacts NADP(+); it reads GAGEMI.

Belongs to the glutamyl-tRNA reductase family. In terms of assembly, homodimer.

It carries out the reaction (S)-4-amino-5-oxopentanoate + tRNA(Glu) + NADP(+) = L-glutamyl-tRNA(Glu) + NADPH + H(+). The protein operates within porphyrin-containing compound metabolism; protoporphyrin-IX biosynthesis; 5-aminolevulinate from L-glutamyl-tRNA(Glu): step 1/2. Functionally, catalyzes the NADPH-dependent reduction of glutamyl-tRNA(Glu) to glutamate 1-semialdehyde (GSA). In Polaromonas naphthalenivorans (strain CJ2), this protein is Glutamyl-tRNA reductase.